We begin with the raw amino-acid sequence, 62 residues long: Small, acid-soluble spore protein A (62 aa).

Belongs to the alpha/beta-type SASP family.

In terms of biological role, SASP are bound to spore DNA. They are double-stranded DNA-binding proteins that cause DNA to change to an a-like conformation. They protect the DNA backbone from chemical and enzymatic cleavage and are thus involved in dormant spore's high resistance to UV light. The chain is Small, acid-soluble spore protein A (sasP-A) from Priestia megaterium (Bacillus megaterium).